The primary structure comprises 363 residues: MNRAPLKRSRILRMALTGVSAVSEESESGNKPFLLRALQIALVVSLYWVTSISMVFLNKYLLDSPSLQLDTPIFVTFYQCLVTSLLCKGLSTLATCCPGMVDFPTLNLDLKVARSVLPLSVVFIGMITFNNLCLKYVGVPFYNVGRSLTTVFNVLLSYLLLKQTTSFYALLTCGVIIGGFWLGIDQEGAEGTLSLTGTIFGVLASLCVSLNAIYTKKVLPAVDHSIWRLTFYNNVNACVLFLPLMIVLGELRALLAFTHLSSAHFWLMMTLGGLFGFAIGYVTGLQIKFTSPLTHNVSGTAKACAQTVLAVLYYEEIKSFLWWTSNLMVLGGSSAYTWVRGWEMQKTQEDPSSKDGEKSAIRV.

A run of 8 helical transmembrane segments spans residues 33–55, 75–97, 110–129, 139–161, 166–184, 194–213, 226–248, and 263–285; these read FLLRALQIALVVSLYWVTSISMV, VTFYQCLVTSLLCKGLSTLATCC, LKVARSVLPLSVVFIGMITF, VPFYNVGRSLTTVFNVLLSYLLL, SFYALLTCGVIIGGFWLGI, SLTGTIFGVLASLCVSLNAI, IWRLTFYNNVNACVLFLPLMIVL, and AHFWLMMTLGGLFGFAIGYVTGL.

This sequence belongs to the TPT transporter family. SLC35C subfamily.

The protein localises to the golgi apparatus membrane. It catalyses the reaction GMP(out) + GDP-beta-L-fucose(in) = GMP(in) + GDP-beta-L-fucose(out). In terms of biological role, antiporter specific for GDP-l-fucose and depending on the concomitant reverse transport of GMP. Involved in GDP-fucose import from the cytoplasm into the Golgi lumen. The protein is GDP-fucose transporter 1 (Slc35c1) of Mus musculus (Mouse).